The chain runs to 349 residues: tRNA pseudouridine synthase D (349 aa).

Phe-27 provides a ligand contact to substrate. The active-site Nucleophile is the Asp-80. Asn-129 is a binding site for substrate. Positions Gly-155–Leu-303 constitute a TRUD domain. Residue Phe-329 coordinates substrate.

It belongs to the pseudouridine synthase TruD family.

The enzyme catalyses uridine(13) in tRNA = pseudouridine(13) in tRNA. In terms of biological role, responsible for synthesis of pseudouridine from uracil-13 in transfer RNAs. The chain is tRNA pseudouridine synthase D from Escherichia coli O127:H6 (strain E2348/69 / EPEC).